The primary structure comprises 174 residues: Xanthine-guanine phosphoribosyltransferase (174 aa).

Residues 49 to 50 (RG) and 108 to 116 (DDLVDTGAT) each bind 5-phospho-alpha-D-ribose 1-diphosphate. D109 is a binding site for Mg(2+). Residues D112 and I155 each coordinate guanine. The xanthine site is built by D112 and I155. Residues 112–116 (DTGAT) and 154–155 (WI) each bind GMP.

This sequence belongs to the purine/pyrimidine phosphoribosyltransferase family. XGPT subfamily. In terms of assembly, homotetramer. Requires Mg(2+) as cofactor.

Its subcellular location is the cell inner membrane. The catalysed reaction is GMP + diphosphate = guanine + 5-phospho-alpha-D-ribose 1-diphosphate. The enzyme catalyses XMP + diphosphate = xanthine + 5-phospho-alpha-D-ribose 1-diphosphate. It carries out the reaction IMP + diphosphate = hypoxanthine + 5-phospho-alpha-D-ribose 1-diphosphate. It participates in purine metabolism; GMP biosynthesis via salvage pathway; GMP from guanine: step 1/1. The protein operates within purine metabolism; XMP biosynthesis via salvage pathway; XMP from xanthine: step 1/1. Its function is as follows. Purine salvage pathway enzyme that catalyzes the transfer of the ribosyl-5-phosphate group from 5-phospho-alpha-D-ribose 1-diphosphate (PRPP) to the N9 position of the 6-oxopurines guanine and xanthine to form the corresponding ribonucleotides GMP (guanosine 5'-monophosphate) and XMP (xanthosine 5'-monophosphate), with the release of PPi. To a lesser extent, also acts on hypoxanthine. The protein is Xanthine-guanine phosphoribosyltransferase of Rhodopseudomonas palustris (strain BisB18).